The primary structure comprises 267 residues: Small ribosomal subunit protein uS3 (267 aa).

A KH type-2 domain is found at 43–111 (IRKEMSKDLE…QVQLNIFEVK (69 aa)). The disordered stretch occupies residues 216–267 (FEEQQAQQNNRPGRRGGDRRPRRGNRSAAPQAAEAPKAEAPAEAAPAAETKE). Residues 241–267 (RSAAPQAAEAPKAEAPAEAAPAAETKE) show a composition bias toward low complexity.

This sequence belongs to the universal ribosomal protein uS3 family. Part of the 30S ribosomal subunit. Forms a tight complex with proteins S10 and S14.

Binds the lower part of the 30S subunit head. Binds mRNA in the 70S ribosome, positioning it for translation. This chain is Small ribosomal subunit protein uS3, found in Bifidobacterium longum subsp. infantis (strain ATCC 15697 / DSM 20088 / JCM 1222 / NCTC 11817 / S12).